Here is a 374-residue protein sequence, read N- to C-terminus: Carbamoyl phosphate synthase small chain (374 aa).

Residues 1 to 186 (MTEPAILVLE…DRNEWKRAAP (186 aa)) form a CPSase region. L-glutamine is bound by residues S47, G237, and G239. The region spanning 189–374 (KVVAYDYGVK…RFITMMAAQS (186 aa)) is the Glutamine amidotransferase type-1 domain. Catalysis depends on C265, which acts as the Nucleophile. L266, Q269, N307, G309, and F310 together coordinate L-glutamine. Active-site residues include H349 and E351.

It belongs to the CarA family. As to quaternary structure, composed of two chains; the small (or glutamine) chain promotes the hydrolysis of glutamine to ammonia, which is used by the large (or ammonia) chain to synthesize carbamoyl phosphate. Tetramer of heterodimers (alpha,beta)4.

The enzyme catalyses hydrogencarbonate + L-glutamine + 2 ATP + H2O = carbamoyl phosphate + L-glutamate + 2 ADP + phosphate + 2 H(+). It catalyses the reaction L-glutamine + H2O = L-glutamate + NH4(+). It participates in amino-acid biosynthesis; L-arginine biosynthesis; carbamoyl phosphate from bicarbonate: step 1/1. It functions in the pathway pyrimidine metabolism; UMP biosynthesis via de novo pathway; (S)-dihydroorotate from bicarbonate: step 1/3. In terms of biological role, small subunit of the glutamine-dependent carbamoyl phosphate synthetase (CPSase). CPSase catalyzes the formation of carbamoyl phosphate from the ammonia moiety of glutamine, carbonate, and phosphate donated by ATP, constituting the first step of 2 biosynthetic pathways, one leading to arginine and/or urea and the other to pyrimidine nucleotides. The small subunit (glutamine amidotransferase) binds and cleaves glutamine to supply the large subunit with the substrate ammonia. The polypeptide is Carbamoyl phosphate synthase small chain (Xylella fastidiosa (strain 9a5c)).